A 474-amino-acid chain; its full sequence is Tubulin gamma-2 chain (474 aa).

Residue 142-148 (AGGTGSG) coordinates GTP.

It belongs to the tubulin family. In terms of assembly, gamma-tubulin complex is composed of gamma-tubulin and GCP proteins.

It localises to the cytoplasm. It is found in the cytoskeleton. Its subcellular location is the microtubule organizing center. The protein localises to the nucleus. The protein resides in the cell cortex. Functionally, tubulin is the major constituent of microtubules. The gamma chain is found at microtubule organizing centers (MTOC) such as the spindle poles, suggesting that it is involved in the minus-end nucleation of microtubule assembly. In terms of biological role, gamma-tubulin complex is essential for the control of microtubular network remodeling in the course of initiation and development of giant-feeding cells, and for the successful reproduction of nematodes (e.g. Meloidogyne spp.) in their plant hosts. The polypeptide is Tubulin gamma-2 chain (TUBG2) (Arabidopsis thaliana (Mouse-ear cress)).